The chain runs to 106 residues: Nucleoid-associated protein MCCL_1934 (106 aa).

The segment at 1-34 is disordered; that stretch reads MRGGGNMQQMMKQMQKMQKKMAEEQEKLKEERIE. Over residues 7-16 the composition is skewed to low complexity; sequence MQQMMKQMQK. Residues 20 to 34 show a composition bias toward basic and acidic residues; that stretch reads KMAEEQEKLKEERIE.

The protein belongs to the YbaB/EbfC family. As to quaternary structure, homodimer.

It localises to the cytoplasm. It is found in the nucleoid. Its function is as follows. Binds to DNA and alters its conformation. May be involved in regulation of gene expression, nucleoid organization and DNA protection. The chain is Nucleoid-associated protein MCCL_1934 from Macrococcus caseolyticus (strain JCSC5402) (Macrococcoides caseolyticum).